Consider the following 385-residue polypeptide: MKQIKVISIFGTRPEAIKMAPLVRRLNENKNVESKVCVTAQHRQMLDQVLNLFDINPDFDLNIMKTKQTLTGITARVLEGLDKIFADENPDIVLVHGDTTTTFAAALAAFYKKIAVGHVEAGLRTYNKYFPFPEEMNRKLTGAVADLHFAPTLGSKKNLLREAVNEKNIFITGNTVVDAMNHTVEKDYVFENDELNKLDYKNKKVIMVTAHRRENWGKGIENICTALRRIAEENEDVEIVYLVHLNPVVKDVVYNNLNGMKGVHLLPPLDTKETHNLMNKCFMVMTDSGGLQEEAPHLGKPVLVLRDVTERPEAVEAGTVKLVGTDIKKIVDEAYKIMKDEEEYEKMSKAINPYGDGKASDRIVDAILYHFGVLKDRPDEFSPKK.

Belongs to the UDP-N-acetylglucosamine 2-epimerase family.

The protein resides in the cytoplasm. It carries out the reaction UDP-N-acetyl-alpha-D-glucosamine = UDP-N-acetyl-alpha-D-mannosamine. In Clostridium acetobutylicum (strain ATCC 824 / DSM 792 / JCM 1419 / IAM 19013 / LMG 5710 / NBRC 13948 / NRRL B-527 / VKM B-1787 / 2291 / W), this protein is Putative UDP-N-acetylglucosamine 2-epimerase.